Reading from the N-terminus, the 462-residue chain is Argininosuccinate lyase (462 aa).

This sequence belongs to the lyase 1 family. Argininosuccinate lyase subfamily.

It is found in the cytoplasm. It catalyses the reaction 2-(N(omega)-L-arginino)succinate = fumarate + L-arginine. The protein operates within amino-acid biosynthesis; L-arginine biosynthesis; L-arginine from L-ornithine and carbamoyl phosphate: step 3/3. This is Argininosuccinate lyase from Leuconostoc citreum (strain KM20).